Consider the following 379-residue polypeptide: Serine/threonine-protein kinase spe-6 (379 aa).

The Protein kinase domain maps to 26–302; sequence WKVLRNIYSG…SQAATEHQVT (277 aa). Residues 32-40 and Lys-55 contribute to the ATP site; that span reads IYSGPFSDV. The active-site Proton acceptor is the Asp-147. Positions 331–379 are disordered; the sequence is ASAKLDAKDNANESMDIEFDDMPPKEGISKSLSAEKSCTKNVETARTEK. A compositionally biased stretch (polar residues) spans 360–372; that stretch reads KSLSAEKSCTKNV.

Belongs to the protein kinase superfamily. CK1 Ser/Thr protein kinase family.

It carries out the reaction L-seryl-[protein] + ATP = O-phospho-L-seryl-[protein] + ADP + H(+). The enzyme catalyses L-threonyl-[protein] + ATP = O-phospho-L-threonyl-[protein] + ADP + H(+). Functionally, serine/threonine-protein kinase which is involved in spermatogenesis. In spermatocytes, regulates meiosis and the localization and assembly of major sperm protein (MSP) into fibrous bodies. In addition, may suppress the initiation of spermiogenesis downstream of spe-8, spe-12, spe-27 and spe-29. The polypeptide is Serine/threonine-protein kinase spe-6 (Caenorhabditis elegans).